Consider the following 260-residue polypeptide: Proteasome subunit alpha (260 aa).

Residues 241 to 260 (VEAEEVPEKEEDYSELDSNY) form a disordered region. A compositionally biased stretch (acidic residues) spans 242–260 (EAEEVPEKEEDYSELDSNY).

This sequence belongs to the peptidase T1A family. The 20S proteasome core is composed of 14 alpha and 14 beta subunits that assemble into four stacked heptameric rings, resulting in a barrel-shaped structure. The two inner rings, each composed of seven catalytic beta subunits, are sandwiched by two outer rings, each composed of seven alpha subunits. The catalytic chamber with the active sites is on the inside of the barrel. Has a gated structure, the ends of the cylinder being occluded by the N-termini of the alpha-subunits. Is capped at one or both ends by the proteasome regulatory ATPase, PAN.

Its subcellular location is the cytoplasm. With respect to regulation, the formation of the proteasomal ATPase PAN-20S proteasome complex, via the docking of the C-termini of PAN into the intersubunit pockets in the alpha-rings, triggers opening of the gate for substrate entry. Interconversion between the open-gate and close-gate conformations leads to a dynamic regulation of the 20S proteasome proteolysis activity. Functionally, component of the proteasome core, a large protease complex with broad specificity involved in protein degradation. This is Proteasome subunit alpha from Thermococcus sibiricus (strain DSM 12597 / MM 739).